The following is a 39-amino-acid chain: Protein disulfide-isomerase A3 (39 aa).

It belongs to the protein disulfide isomerase family. Part of the major histocompatibility complex class I (MHC I) peptide loading complex composed of TAP1, TAP2, B2M, MHC heavy chain, TAPBP, PDIA3, and CALR. Interacts with ERP27 and CANX. Interacts with SERPINA2 and with SERPINA1. Interacts with ATP2A2. Within the major histocompatibility complex class I (MHC I) peptide loading complex forms reversible disulfide-linked heterodimers with TAPBP as part of its protein folding chaperone activity. This is essential to assist the dynamic assembly of the MHC I complex with high affinity antigens in the endoplasmic reticulum. Post-translationally, phosphorylated. As to expression, predominantly expressed in liver. Low in brain, testis and colon. Not detectable in pancreas and skeletal muscle.

Its subcellular location is the endoplasmic reticulum. It localises to the endoplasmic reticulum lumen. The protein localises to the melanosome. It carries out the reaction Catalyzes the rearrangement of -S-S- bonds in proteins.. Protein disulfide isomerase that catalyzes the formation, isomerization, and reduction or oxidation of disulfide bonds in client proteins and functions as a protein folding chaperone. Core component of the major histocompatibility complex class I (MHC I) peptide loading complex where it functions as an essential folding chaperone for TAPBP. Through TAPBP, assists the dynamic assembly of the MHC I complex with high affinity antigens in the endoplasmic reticulum. Therefore, plays a crucial role in the presentation of antigens to cytotoxic T cells in adaptive immunity. In Papio hamadryas (Hamadryas baboon), this protein is Protein disulfide-isomerase A3 (PDIA3).